The chain runs to 304 residues: UPF0282 protein TSIB_1029 (304 aa).

This sequence belongs to the UPF0282 family.

This chain is UPF0282 protein TSIB_1029, found in Thermococcus sibiricus (strain DSM 12597 / MM 739).